The chain runs to 448 residues: tRNA modification GTPase MnmE (448 aa).

Positions 24, 81, and 120 each coordinate (6S)-5-formyl-5,6,7,8-tetrahydrofolate. The 158-residue stretch at 216 to 373 folds into the TrmE-type G domain; that stretch reads GLNVVLVGAP…LKRTLLCEAG (158 aa). Residue asparagine 226 coordinates K(+). GTP-binding positions include 226–231, 245–251, and 270–273; these read NVGKSS, TDIAGTT, and DTAG. Mg(2+) is bound at residue serine 230. K(+)-binding residues include threonine 245, isoleucine 247, and threonine 250. Threonine 251 is a binding site for Mg(2+). (6S)-5-formyl-5,6,7,8-tetrahydrofolate is bound at residue lysine 448.

It belongs to the TRAFAC class TrmE-Era-EngA-EngB-Septin-like GTPase superfamily. TrmE GTPase family. As to quaternary structure, homodimer. Heterotetramer of two MnmE and two MnmG subunits. The cofactor is K(+).

It is found in the cytoplasm. Exhibits a very high intrinsic GTPase hydrolysis rate. Involved in the addition of a carboxymethylaminomethyl (cmnm) group at the wobble position (U34) of certain tRNAs, forming tRNA-cmnm(5)s(2)U34. This chain is tRNA modification GTPase MnmE, found in Neisseria gonorrhoeae (strain ATCC 700825 / FA 1090).